An 806-amino-acid chain; its full sequence is Glycerol-3-phosphate acyltransferase (806 aa).

The HXXXXD motif motif lies at 305 to 310; the sequence is CHRSHM.

The protein belongs to the GPAT/DAPAT family.

The protein resides in the cell inner membrane. It catalyses the reaction sn-glycerol 3-phosphate + an acyl-CoA = a 1-acyl-sn-glycero-3-phosphate + CoA. The protein operates within phospholipid metabolism; CDP-diacylglycerol biosynthesis; CDP-diacylglycerol from sn-glycerol 3-phosphate: step 1/3. This chain is Glycerol-3-phosphate acyltransferase, found in Salmonella paratyphi B (strain ATCC BAA-1250 / SPB7).